The following is a 380-amino-acid chain: Ceramide synthase 2 (380 aa).

Topologically, residues 1–40 (MLQTLYDYFWWERLWLPVNLTWADLEDKDGRVYAKASDLY) are lumenal. Residue N19 is glycosylated (N-linked (GlcNAc...) asparagine). A helical membrane pass occupies residues 41-61 (ITLPLALLFLVIRYFFELYVA). The interval 67 to 128 (LLNVKEKTRL…RRRRNQDRPS (62 aa)) is homeobox-like. In terms of domain architecture, TLC spans 131–332 (KKFREASWRF…ILRMAHKFIT (202 aa)). The next 4 membrane-spanning stretches (helical) occupy residues 140-160 (FTYY…KPWF), 175-195 (IIPS…SLLF), 209-229 (QIIH…ANYV), and 264-284 (LFIV…PFWI). The Last loop motif motif lies at 291–300 (YPLELYPAFF). The helical transmembrane segment at 304 to 324 (FFNFMMAVLQMLHIFWAYFIL) threads the bilayer. Topologically, residues 325-380 (RMAHKFITGKLIEDERSDREETESSEGEETAAGAGAKSRLLANGHPILNNNHPKND) are cytoplasmic. The interval 340-380 (RSDREETESSEGEETAAGAGAKSRLLANGHPILNNNHPKND) is disordered. At S341 the chain carries Phosphoserine. Over residues 344 to 353 (EETESSEGEE) the composition is skewed to acidic residues. The residue at position 346 (T346) is a Phosphothreonine. Residues S348 and S349 each carry the phosphoserine modification.

In terms of assembly, interacts with ATP6V0C, ASGR1, ASGR2 and SLC22A1/OCT1. Interacts with ELOV1, HSD17B12 and TECR. Interacts with NDUFS2. Interacts with PAQR4; the interaction regulates the stability and activity of CERS2 and is inhibited in presence of ceramides. In terms of processing, acetylated. Deacetylation by SIRT3 increases enzyme activity and promotes mitochondrial ceramide accumulation. Post-translationally, phosphorylated at the C-terminus by CK2, leading to increase the ceramide synthase activity. In terms of tissue distribution, broadly expressed, with highest levels in liver and kidney. In brain is detected in neurons, oligodentrocytes, ependymal cells and epithelial cells of the choroid plexus. In kidney is detected in collecting ducts and to a lesser degree in proximal tubules.

The protein resides in the endoplasmic reticulum membrane. The catalysed reaction is a very long-chain fatty acyl-CoA + a sphingoid base = an N-(very-long-chain fatty acyl)-sphingoid base + CoA + H(+). It carries out the reaction docosanoyl-CoA + sphinganine = N-docosanoylsphinganine + CoA + H(+). The enzyme catalyses tetracosanoyl-CoA + sphinganine = N-tetracosanoylsphinganine + CoA + H(+). It catalyses the reaction hexacosanoyl-CoA + sphinganine = N-hexacosanoylsphinganine + CoA + H(+). The catalysed reaction is (15Z)-tetracosenoyl-CoA + sphinganine = N-(15Z-tetracosenoyl)-sphinganine + CoA + H(+). It carries out the reaction 2-hydroxytetracosanoyl-CoA + sphinganine = N-(2-hydroxytetracosanoyl)-sphinganine + CoA + H(+). The enzyme catalyses 2-hydroxydocosanoyl-CoA + sphinganine = N-(2-hydroxydocosanoyl)-sphinganine + CoA + H(+). It catalyses the reaction 2-hydroxytetracosenoyl-CoA + sphinganine = N-(2-hydroxytetracosenoyl)-sphinganine + CoA + H(+). The catalysed reaction is tetracosenoyl-CoA + sphinganine = an N-tetracosenoylsphinganine + CoA + H(+). It carries out the reaction hexacosenoyl-CoA + sphinganine = N-hexacosenoylsphinganine + CoA + H(+). The enzyme catalyses tetracosanoyl-CoA + sphing-4-enine = N-tetracosanoyl-sphing-4-enine + CoA + H(+). It catalyses the reaction tetracosenoyl-CoA + sphing-4-enine = N-(tetracosenoyl)-sphing-4-enine + CoA + H(+). The catalysed reaction is heptadecasphing-4-enine + tetracosanoyl-CoA = N-tetracosanoyl-heptadecasphing-4-enine + CoA + H(+). It carries out the reaction a fatty acyl-CoA + sphing-4-enine = an N-acylsphing-4-enine + CoA + H(+). The enzyme catalyses sphing-4-enine + hexadecanoyl-CoA = N-hexadecanoylsphing-4-enine + CoA + H(+). It catalyses the reaction sphing-4-enine + octadecanoyl-CoA = N-octadecanoylsphing-4-enine + CoA + H(+). The catalysed reaction is eicosanoyl-CoA + sphing-4-enine = N-eicosanoyl-sphing-4-enine + CoA + H(+). It carries out the reaction sphinganine + hexadecanoyl-CoA = N-hexadecanoylsphinganine + CoA + H(+). The enzyme catalyses sphinganine + octadecanoyl-CoA = N-(octadecanoyl)-sphinganine + CoA + H(+). It catalyses the reaction sphinganine + (9Z)-octadecenoyl-CoA = N-(9Z-octadecenoyl)-sphinganine + CoA + H(+). The catalysed reaction is eicosanoyl-CoA + sphinganine = N-eicosanoylsphinganine + CoA + H(+). The protein operates within lipid metabolism; sphingolipid metabolism. With respect to regulation, ceramide synthase activity is inhibited by sphingosine-1-phosphate. Its function is as follows. Ceramide synthase that catalyzes the transfer of the acyl chain from acyl-CoA to a sphingoid base, with high selectivity toward very-long-chain fatty acyl-CoA (chain length C22-C27). N-acylates sphinganine and sphingosine bases to form dihydroceramides and ceramides in de novo synthesis and salvage pathways, respectively. Plays a non-redundant role in the synthesis of ceramides with very-long-chain fatty acids in kidney, liver and brain. Regulates the abundance of myelin-specific sphingolipids galactosylceramide and sulfatide that affects myelin sheath architecture and motor neuron functions. The protein is Ceramide synthase 2 of Mus musculus (Mouse).